Here is a 104-residue protein sequence, read N- to C-terminus: Salivary protein FS145 (104 aa).

The N-terminal stretch at 1-18 (MKLFAVFLLFCLVNQIYC) is a signal peptide. 4 disulfides stabilise this stretch: Cys-32-Cys-80, Cys-62-Cys-89, Cys-72-Cys-100, and Cys-76-Cys-102. Positions 92–94 (WGD) match the Putative integrin attachment site; atypical (WGD) motif.

As to quaternary structure, interacts with host integrin alpha-V/beta-3 (ITGAV:ITGB3).

The protein localises to the secreted. Inhibits proliferation, adhesion and migration of host cells as well as host angiogenesis by blocking host integrin alpha-V/beta-3 (ITGAV:ITGB3). The protein is Salivary protein FS145 of Xenopsylla cheopis (Oriental rat flea).